The sequence spans 70 residues: Small ribosomal subunit protein bS21B (70 aa).

The protein belongs to the bacterial ribosomal protein bS21 family.

This Rhizobium etli (strain ATCC 51251 / DSM 11541 / JCM 21823 / NBRC 15573 / CFN 42) protein is Small ribosomal subunit protein bS21B.